The primary structure comprises 131 residues: Ribonuclease VapC30 (131 aa).

A PINc domain is found at 1 to 129 (MVIDTSALVA…FQHTDIATVA (129 aa)). The Mg(2+) site is built by Asp4 and Asp99.

The protein belongs to the PINc/VapC protein family. Mg(2+) is required as a cofactor.

Its function is as follows. Toxic component of a type II toxin-antitoxin (TA) system. An RNase. Its toxic effect is neutralized by coexpression with cognate antitoxin VapB30. In Mycobacterium tuberculosis (strain CDC 1551 / Oshkosh), this protein is Ribonuclease VapC30.